Here is a 58-residue protein sequence, read N- to C-terminus: Small ribosomal subunit protein bS21 (58 aa).

This sequence belongs to the bacterial ribosomal protein bS21 family.

The polypeptide is Small ribosomal subunit protein bS21 (Synechococcus sp. (strain CC9605)).